The primary structure comprises 329 residues: Chlorophyllase-1, chloroplastic (329 aa).

The N-terminal 21 residues, 1–21 (MAAMVDAKPAASVQGTPLLAT), are a transit peptide targeting the chloroplast. Positions 145-149 (GHSRG) match the GXSXG motif. The active-site Nucleophile is the serine 147. Residues aspartate 169 and histidine 242 each act as charge relay system in the active site.

Belongs to the AB hydrolase superfamily. Lipase family.

The protein localises to the plastid. It is found in the chloroplast. It carries out the reaction a chlorophyll + H2O = a chlorophyllide + phytol + H(+). The protein operates within porphyrin-containing compound metabolism; chlorophyll degradation. Its function is as follows. Catalyzes the hydrolysis of ester bond in chlorophyll to yield chlorophyllide and phytol. The polypeptide is Chlorophyllase-1, chloroplastic (CHLASE1) (Citrus sinensis (Sweet orange)).